Reading from the N-terminus, the 311-residue chain is Urease accessory protein UreD 2 (311 aa).

Belongs to the UreD family. In terms of assembly, ureD, UreF and UreG form a complex that acts as a GTP-hydrolysis-dependent molecular chaperone, activating the urease apoprotein by helping to assemble the nickel containing metallocenter of UreC. The UreE protein probably delivers the nickel.

The protein localises to the cytoplasm. In terms of biological role, required for maturation of urease via the functional incorporation of the urease nickel metallocenter. This Methylorubrum extorquens (strain PA1) (Methylobacterium extorquens) protein is Urease accessory protein UreD 2.